We begin with the raw amino-acid sequence, 430 residues long: Cytochrome c biogenesis protein CcsB (430 aa).

Helical transmembrane passes span 14–34 (LRLAIALLLLIAAASAVGTIL), 72–92 (SVWFLALLAWLGLALMLCSWR), and 162–182 (VGPLLVHTGLVLLLIGAAWGA).

This sequence belongs to the Ccs1/CcsB family. As to quaternary structure, may interact with CcsA.

Its subcellular location is the cellular thylakoid membrane. In terms of biological role, required during biogenesis of c-type cytochromes (cytochrome c6 and cytochrome f) at the step of heme attachment. The polypeptide is Cytochrome c biogenesis protein CcsB (Synechococcus sp. (strain WH7803)).